We begin with the raw amino-acid sequence, 309 residues long: Elongation factor Ts (309 aa).

An involved in Mg(2+) ion dislocation from EF-Tu region spans residues 82-85; that stretch reads TDFV.

It belongs to the EF-Ts family.

It is found in the cytoplasm. Functionally, associates with the EF-Tu.GDP complex and induces the exchange of GDP to GTP. It remains bound to the aminoacyl-tRNA.EF-Tu.GTP complex up to the GTP hydrolysis stage on the ribosome. This chain is Elongation factor Ts, found in Rickettsia akari (strain Hartford).